Reading from the N-terminus, the 98-residue chain is NADH-ubiquinone oxidoreductase chain 4L (98 aa).

The next 3 membrane-spanning stretches (helical) occupy residues 1–21, 29–49, and 58–78; these read MPII…GMLT, SLLC…LMAL, and IVPI…LSLL.

This sequence belongs to the complex I subunit 4L family. As to quaternary structure, core subunit of respiratory chain NADH dehydrogenase (Complex I) which is composed of 45 different subunits.

The protein localises to the mitochondrion inner membrane. It catalyses the reaction a ubiquinone + NADH + 5 H(+)(in) = a ubiquinol + NAD(+) + 4 H(+)(out). Its function is as follows. Core subunit of the mitochondrial membrane respiratory chain NADH dehydrogenase (Complex I) which catalyzes electron transfer from NADH through the respiratory chain, using ubiquinone as an electron acceptor. Part of the enzyme membrane arm which is embedded in the lipid bilayer and involved in proton translocation. This Presbytis melalophos (Mitred leaf monkey) protein is NADH-ubiquinone oxidoreductase chain 4L (MT-ND4L).